Here is a 365-residue protein sequence, read N- to C-terminus: tRNA/tmRNA (uracil-C(5))-methyltransferase (365 aa).

Positions 189, 217, 222, 238, and 298 each coordinate S-adenosyl-L-methionine. The Nucleophile role is filled by Cys-323. Glu-357 (proton acceptor) is an active-site residue.

The protein belongs to the class I-like SAM-binding methyltransferase superfamily. RNA M5U methyltransferase family. TrmA subfamily.

It carries out the reaction uridine(54) in tRNA + S-adenosyl-L-methionine = 5-methyluridine(54) in tRNA + S-adenosyl-L-homocysteine + H(+). It catalyses the reaction uridine(341) in tmRNA + S-adenosyl-L-methionine = 5-methyluridine(341) in tmRNA + S-adenosyl-L-homocysteine + H(+). Its function is as follows. Dual-specificity methyltransferase that catalyzes the formation of 5-methyluridine at position 54 (m5U54) in all tRNAs, and that of position 341 (m5U341) in tmRNA (transfer-mRNA). In Shewanella sp. (strain ANA-3), this protein is tRNA/tmRNA (uracil-C(5))-methyltransferase.